The primary structure comprises 363 residues: Lipoyl synthase (363 aa).

Positions 55, 60, 66, 81, 85, 88, and 292 each coordinate [4Fe-4S] cluster. Residues 67-281 (WESREATFLI…SKLAKELGFG (215 aa)) enclose the Radical SAM core domain. Positions 338-363 (PSEETPVTTRMAKTPAQSNSVAATIR) are disordered. Polar residues predominate over residues 352 to 363 (PAQSNSVAATIR).

It belongs to the radical SAM superfamily. Lipoyl synthase family. [4Fe-4S] cluster serves as cofactor.

Its subcellular location is the cytoplasm. The enzyme catalyses [[Fe-S] cluster scaffold protein carrying a second [4Fe-4S](2+) cluster] + N(6)-octanoyl-L-lysyl-[protein] + 2 oxidized [2Fe-2S]-[ferredoxin] + 2 S-adenosyl-L-methionine + 4 H(+) = [[Fe-S] cluster scaffold protein] + N(6)-[(R)-dihydrolipoyl]-L-lysyl-[protein] + 4 Fe(3+) + 2 hydrogen sulfide + 2 5'-deoxyadenosine + 2 L-methionine + 2 reduced [2Fe-2S]-[ferredoxin]. The protein operates within protein modification; protein lipoylation via endogenous pathway; protein N(6)-(lipoyl)lysine from octanoyl-[acyl-carrier-protein]: step 2/2. Catalyzes the radical-mediated insertion of two sulfur atoms into the C-6 and C-8 positions of the octanoyl moiety bound to the lipoyl domains of lipoate-dependent enzymes, thereby converting the octanoylated domains into lipoylated derivatives. The sequence is that of Lipoyl synthase from Corynebacterium aurimucosum (strain ATCC 700975 / DSM 44827 / CIP 107346 / CN-1) (Corynebacterium nigricans).